We begin with the raw amino-acid sequence, 551 residues long: MEEAELVKGRLQAITDKRKIQEEISQKRLKIEEEKLKHQHLKKKALREKWLLDGIGSGKEHDEMKKQNQQDQHQTQVLEQSILRLEKEIQDLEKAELQISANEEVILKKLKSIERTTEDIIRSVKVEKEEIPEESIEDIYANIPDLPSSYIPSRLRKERNEESDDEQNRKALYAMEIKVEKDLKTGESVVLSSIPLPSDDFKSTGIKVYEDRQKSVYAVSSNQNTAYNGTDGLAPVEVEDLLRQASERNSKSPTEYHEPVYANPFCRPMTPQRERVISPGPNSQERMVMMKANGLDHHESESVHGMTDGLSERRSNGLAHTSPTRPTPQPRSKVQQVEEMVHTQQKRMPSPWEESSIRQNEYEVSPRTELSPSRASPGKSGPQCSSPICQEEADVRYNIVHSLPPDVDDTEPVTMIFMGYQQADENEEEKKLLTGYDGVIHAELVVIDDEAEDDEGQAEKPSYHPVAPCSQVYQPAKPTPLPRKRSEVSPHENTNHKSPHKNSISLKEQEERLGSPARHSPLGVPGAGDGTEDPSLTALRIRMAKLGKKVI.

Position 1 is an N-acetylmethionine (Met-1). The stretch at 12–106 forms a coiled coil; the sequence is QAITDKRKIQ…LQISANEEVI (95 aa). Lys-125 participates in a covalent cross-link: Glycyl lysine isopeptide (Lys-Gly) (interchain with G-Cter in SUMO2). Ser-135 and Ser-163 each carry phosphoserine. A Glycyl lysine isopeptide (Lys-Gly) (interchain with G-Cter in SUMO1); alternate cross-link involves residue Lys-178. Residue Lys-178 forms a Glycyl lysine isopeptide (Lys-Gly) (interchain with G-Cter in SUMO2); alternate linkage. The segment covering 247–258 has biased composition (basic and acidic residues); that stretch reads ERNSKSPTEYHE. The tract at residues 247 to 267 is disordered; the sequence is ERNSKSPTEYHEPVYANPFCR. The residue at position 270 (Thr-270) is a Phosphothreonine. Disordered stretches follow at residues 298–387 and 452–536; these read HESE…CSSP and EDDE…DPSL. Phosphoserine occurs at positions 322, 350, 371, 376, 385, and 386. A compositionally biased stretch (basic and acidic residues) spans 484–495; the sequence is KRSEVSPHENTN. Ser-498, Ser-515, and Ser-520 each carry phosphoserine.

It belongs to the paralemmin family. Interacts with GLUL. Phosphorylated. As to expression, expressed in the brain and the spinal cord. Expressed in the anterior olfactory nucleus, the olfactory tubercle, the nucleus supraopticus, the nucleus of the lateral olfactory tract, the piriform cortex, the cortico-amygdaloid transition zone, the septofimbrial nucleus and the indusium griseum (at protein level).

The protein localises to the cytoplasm. The protein resides in the cell projection. Its subcellular location is the dendrite. It localises to the dendritic spine. This Rattus norvegicus (Rat) protein is Palmdelphin (Palmd).